Here is a 304-residue protein sequence, read N- to C-terminus: Porphobilinogen deaminase (304 aa).

Position 240 is an S-(dipyrrolylmethanemethyl)cysteine (Cys-240).

This sequence belongs to the HMBS family. As to quaternary structure, monomer. The cofactor is dipyrromethane.

The catalysed reaction is 4 porphobilinogen + H2O = hydroxymethylbilane + 4 NH4(+). It participates in porphyrin-containing compound metabolism; protoporphyrin-IX biosynthesis; coproporphyrinogen-III from 5-aminolevulinate: step 2/4. Tetrapolymerization of the monopyrrole PBG into the hydroxymethylbilane pre-uroporphyrinogen in several discrete steps. In Xanthomonas euvesicatoria pv. vesicatoria (strain 85-10) (Xanthomonas campestris pv. vesicatoria), this protein is Porphobilinogen deaminase.